A 397-amino-acid chain; its full sequence is Multidrug efflux pump subunit AcrA (397 aa).

The first 24 residues, 1–24, serve as a signal peptide directing secretion; that stretch reads MNKNRGFTPLAVVLMLSGSLALTG. A lipid anchor (N-palmitoyl cysteine) is attached at cysteine 25. The S-diacylglycerol cysteine moiety is linked to residue cysteine 25. Positions 98 to 172 form a coiled coil; that stretch reads PATYQATYDS…AVETARINLA (75 aa). The tract at residues 377-397 is disordered; the sequence is EVTADNNQQAASGAQPEQSKS. Over residues 379-397 the composition is skewed to polar residues; sequence TADNNQQAASGAQPEQSKS.

The protein belongs to the membrane fusion protein (MFP) (TC 8.A.1) family. In terms of assembly, monomeric in solution. Homotrimeric; interacts independently with AcrB and TolC as well as AcrZ. Part of the AcrA-AcrB-TolC efflux pump.

It localises to the cell inner membrane. Its function is as follows. AcrA-AcrB-AcrZ-TolC is a drug efflux protein complex with broad substrate specificity that uses the proton motive force to export substrates. This subunit may act as an adapter protein that links AcrB and TolC stably together. In Escherichia coli O157:H7, this protein is Multidrug efflux pump subunit AcrA (acrA).